The chain runs to 178 residues: NAD(P)H-quinone oxidoreductase subunit 6, chloroplastic (178 aa).

5 helical membrane passes run F10 to T30, P32 to L52, A61 to M81, L94 to I114, and F154 to A174.

The protein belongs to the complex I subunit 6 family. NDH is composed of at least 16 different subunits, 5 of which are encoded in the nucleus.

It localises to the plastid. Its subcellular location is the chloroplast thylakoid membrane. It catalyses the reaction a plastoquinone + NADH + (n+1) H(+)(in) = a plastoquinol + NAD(+) + n H(+)(out). The catalysed reaction is a plastoquinone + NADPH + (n+1) H(+)(in) = a plastoquinol + NADP(+) + n H(+)(out). Its function is as follows. NDH shuttles electrons from NAD(P)H:plastoquinone, via FMN and iron-sulfur (Fe-S) centers, to quinones in the photosynthetic chain and possibly in a chloroplast respiratory chain. The immediate electron acceptor for the enzyme in this species is believed to be plastoquinone. Couples the redox reaction to proton translocation, and thus conserves the redox energy in a proton gradient. The chain is NAD(P)H-quinone oxidoreductase subunit 6, chloroplastic (ndhG) from Citrus sinensis (Sweet orange).